A 339-amino-acid polypeptide reads, in one-letter code: Dihydroorotate dehydrogenase (quinone) (339 aa).

FMN is bound by residues 62-66 (AGMDK) and T86. K66 serves as a coordination point for substrate. 111-115 (NRMGF) provides a ligand contact to substrate. FMN-binding residues include N139 and N172. Residue N172 coordinates substrate. S175 (nucleophile) is an active-site residue. A substrate-binding site is contributed by N177. FMN-binding residues include K217 and T245. 246–247 (NT) serves as a coordination point for substrate. FMN contacts are provided by residues G268, G297, and 318–319 (YS).

The protein belongs to the dihydroorotate dehydrogenase family. Type 2 subfamily. Monomer. The cofactor is FMN.

Its subcellular location is the cell membrane. The catalysed reaction is (S)-dihydroorotate + a quinone = orotate + a quinol. It functions in the pathway pyrimidine metabolism; UMP biosynthesis via de novo pathway; orotate from (S)-dihydroorotate (quinone route): step 1/1. In terms of biological role, catalyzes the conversion of dihydroorotate to orotate with quinone as electron acceptor. The chain is Dihydroorotate dehydrogenase (quinone) from Shewanella sediminis (strain HAW-EB3).